The sequence spans 161 residues: Putative pre-16S rRNA nuclease (161 aa).

The protein belongs to the YqgF nuclease family.

It localises to the cytoplasm. Functionally, could be a nuclease involved in processing of the 5'-end of pre-16S rRNA. This chain is Putative pre-16S rRNA nuclease, found in Bartonella bacilliformis (strain ATCC 35685 / KC583 / Herrer 020/F12,63).